A 340-amino-acid polypeptide reads, in one-letter code: tRNA N6-adenosine threonylcarbamoyltransferase (340 aa).

Positions 113 and 117 each coordinate Fe cation. Substrate-binding positions include 135–139 (LVSGG), Asp169, Gly182, Asp186, and Asn274. Position 302 (Asp302) interacts with Fe cation.

Belongs to the KAE1 / TsaD family. Requires Fe(2+) as cofactor.

The protein localises to the cytoplasm. It carries out the reaction L-threonylcarbamoyladenylate + adenosine(37) in tRNA = N(6)-L-threonylcarbamoyladenosine(37) in tRNA + AMP + H(+). In terms of biological role, required for the formation of a threonylcarbamoyl group on adenosine at position 37 (t(6)A37) in tRNAs that read codons beginning with adenine. Is involved in the transfer of the threonylcarbamoyl moiety of threonylcarbamoyl-AMP (TC-AMP) to the N6 group of A37, together with TsaE and TsaB. TsaD likely plays a direct catalytic role in this reaction. This is tRNA N6-adenosine threonylcarbamoyltransferase from Mycolicibacterium smegmatis (strain ATCC 700084 / mc(2)155) (Mycobacterium smegmatis).